Reading from the N-terminus, the 503-residue chain is Maturase K (503 aa).

It belongs to the intron maturase 2 family. MatK subfamily.

It is found in the plastid. It localises to the chloroplast. Usually encoded in the trnK tRNA gene intron. Probably assists in splicing its own and other chloroplast group II introns. The sequence is that of Maturase K from Rosa carolina (Pasture rose).